The sequence spans 409 residues: FAD-dependent monooxygenase phnB (409 aa).

Residues Glu35, Ala50, Arg110, and Asp311 each contribute to the FAD site.

It belongs to the paxM FAD-dependent monooxygenase family. FAD is required as a cofactor.

The enzyme catalyses 3,6,7,9-tetrahydroxy-3-methyl-2,3-dihydro-1H-naphtho[2,1-b]pyran-1-one + NADPH + O2 + H(+) = 2,3,4,7,9-pentahydroxy-6-methyl-1H-phenalen-1-one + NADP(+) + 2 H2O. It participates in secondary metabolite biosynthesis. FAD-dependent monooxygenase; part of the gene cluster that mediates the biosynthesis of phenalenones such as herqueinone, compounds that have been reported to treat tumors, bacterial infections and/or mycoses, and rheumatic diseases. The non-reducing polyketide synthase phnA synthesizes the heptaketide backbone and cyclizes it into the angular, hemiketal-containing naphtho-gamma-pyrone prephenalenone. The product template (PT) domain of phnA catalyzes only the C4-C9 aldol condensation, which is unprecedented among known PT domains. The transformation of prephenalenone to phenalenones requires an FAD-dependent monooxygenase phnB, which catalyzes the C2 aromatic hydroxylation of prephenalenone and ring opening of the gamma-pyrone ring simultaneously. Subsequent intramolecular deprotonation of C3 phenolic oxygen accelerates phenalenone ring closure to yield the tricyclic phenalenone core with a C2 hydroxylation. The prenyltransferase phnF further catalyzes reverse C-prenylation of phenalenone by direct electrophilic substitution at C6, or possibly via first a forward O-prenylation of a neighboring phenol in phenalenone, followed by a Claisen rearrangement. The hydroalkoxylation enzyme phnH catalyzes the 5-exo-trig cyclization via acid catalysis after the spontaneous deprotonation of 7-OH, which leads to the formation of the dihydrobenzofuran atrovenetin. Atrovenetin is further converted to deoxyherqueinone by the O-methyltransferase phnC which can methylate C2-OH to stabilize the northern portion of the phenalenone core. Finally, the oxidoreductase phnG converts deoxyherqueinone to herqueinone via C6 hydroxylation. This chain is FAD-dependent monooxygenase phnB, found in Penicillium herquei.